A 429-amino-acid polypeptide reads, in one-letter code: Glutamate-1-semialdehyde 2,1-aminomutase 2 (429 aa).

Lys268 carries the post-translational modification N6-(pyridoxal phosphate)lysine.

It belongs to the class-III pyridoxal-phosphate-dependent aminotransferase family. HemL subfamily. As to quaternary structure, homodimer. It depends on pyridoxal 5'-phosphate as a cofactor.

The protein localises to the cytoplasm. The enzyme catalyses (S)-4-amino-5-oxopentanoate = 5-aminolevulinate. The protein operates within porphyrin-containing compound metabolism; protoporphyrin-IX biosynthesis; 5-aminolevulinate from L-glutamyl-tRNA(Glu): step 2/2. The polypeptide is Glutamate-1-semialdehyde 2,1-aminomutase 2 (Staphylococcus aureus (strain MSSA476)).